The chain runs to 373 residues: Cobalt-precorrin-5B C(1)-methyltransferase (373 aa).

The protein belongs to the CbiD family.

It catalyses the reaction Co-precorrin-5B + S-adenosyl-L-methionine = Co-precorrin-6A + S-adenosyl-L-homocysteine. The protein operates within cofactor biosynthesis; adenosylcobalamin biosynthesis; cob(II)yrinate a,c-diamide from sirohydrochlorin (anaerobic route): step 6/10. Functionally, catalyzes the methylation of C-1 in cobalt-precorrin-5B to form cobalt-precorrin-6A. This is Cobalt-precorrin-5B C(1)-methyltransferase from Halorhodospira halophila (strain DSM 244 / SL1) (Ectothiorhodospira halophila (strain DSM 244 / SL1)).